A 138-amino-acid chain; its full sequence is Small ribosomal subunit protein uS9 (138 aa).

Residues 100–118 show a composition bias toward basic and acidic residues; sequence PENRPPLKTEGYLTRDPRA. The interval 100-138 is disordered; that stretch reads PENRPPLKTEGYLTRDPRAKERKKYGLHKARKAPQYSKR. The span at 119–138 shows a compositional bias: basic residues; sequence KERKKYGLHKARKAPQYSKR.

It belongs to the universal ribosomal protein uS9 family.

The sequence is that of Small ribosomal subunit protein uS9 from Trichormus variabilis (strain ATCC 29413 / PCC 7937) (Anabaena variabilis).